Reading from the N-terminus, the 504-residue chain is MNKFDEFIESNEKDLDVDTSTRNSIISMSPVRKTGRKIRSASSNGYRLEHHRTSSAGSMHSQRLMTPTRLNDQDHPLQAKPDARRVVTRHSSVSVPNAMSKRRSLIQPMVVPTTPESQNNLPSVSHSEGSYGIPLESTTVLSSEQAMASGLRRSRNGSSQSVNSMIATTIPTNGVDVSALLQSLATKELELLECKQKIEDLKKQTQHEEQNYTRRARELHELKEQVSKHLDPSLNTPVKNRAFSPVYQNIPLESRTENAGNSSLPSSVSKPKNMGHQSTNQSRSVSPQDIQERRQRDDSSDSSKQSLWSKPLALFNQFDKIIQHEIERTLNWDDSLSGTPEVQEGTPTSNSESSAQQYDNEAPGARQKSPSQGSVSRSLWSFVSDVKAGLLGIEEENDNDVITDNRCDPVYKSDRQHEQKKSTHKITNRGQAEDSGDDSSLNMRKFKTTTKFQKDNAGNNSLTDESGHRTREKKSKRSSNKLSFIGEPDNDNSSVKNSVEMTDF.

The tract at residues 32 to 62 (RKTGRKIRSASSNGYRLEHHRTSSAGSMHSQ) is disordered. Residues 179–231 (ALLQSLATKELELLECKQKIEDLKKQTQHEEQNYTRRARELHELKEQVSKHLD) are a coiled coil. A Phosphothreonine modification is found at threonine 236. 2 positions are modified to phosphoserine: serine 244 and serine 286. Disordered regions lie at residues 252–306 (LESR…SKQS), 332–377 (WDDS…SVSR), and 400–504 (DVIT…MTDF). The segment covering 257–287 (ENAGNSSLPSSVSKPKNMGHQSTNQSRSVSP) has biased composition (polar residues). Over residues 290 to 301 (IQERRQRDDSSD) the composition is skewed to basic and acidic residues. Polar residues-rich tracts occupy residues 332-359 (WDDSLSGTPEVQEGTPTSNSESSAQQYD) and 368-377 (KSPSQGSVSR). The segment covering 403-421 (TDNRCDPVYKSDRQHEQKK) has biased composition (basic and acidic residues). Residues 470–479 (TREKKSKRSS) show a composition bias toward basic residues. Residues 491–504 (DNSSVKNSVEMTDF) are compositionally biased toward polar residues.

This sequence belongs to the TDA11 family.

It is found in the cytoplasm. In Saccharomyces cerevisiae (strain ATCC 204508 / S288c) (Baker's yeast), this protein is Topoisomerase I damage affected protein 11 (TDA11).